The primary structure comprises 386 residues: MILGSLSRAGPLPLLRQPPIMQPPLDLKQILPFPLEPAPTLGLFSNYSTMDPVQKAVLSHTFGGPLLKTKRPVISCNICQIRFNSQSQAEAHYKGNRHARRVKGIEAAKTRGREPGVREPGDPAPPGSTPTNGDGVAPRPVSMENGLGPAPGSPEKQPGSPSPPSIPETGQGVTKGEGGTPAPASLPGGSKEEEEKAKRLLYCALCKVAVNSLSQLEAHNKGTKHKTILEARSGLGPIKAYPRLGPPTPGEPEAPAQDRTFHCEICNVKVNSEVQLKQHISSRRHRDGVAGKPNPLLSRHKKSRGAGELAGTLTFSKELPKSLAGGLLPSPLAVAAVMAAAAGSPLSLRPAPAAPLLQGPPITHPLLHPAPGPIRTAHGPILFSPY.

Residues 74-98 form a Matrin-type 1 zinc finger; sequence ISCNICQIRFNSQSQAEAHYKGNRH. The tract at residues 90-193 is disordered; it reads EAHYKGNRHA…ASLPGGSKEE (104 aa). Over residues 103-121 the composition is skewed to basic and acidic residues; the sequence is KGIEAAKTRGREPGVREPG. The interval 145–351 is necessary for binding to ITPR1, CEBPA and p53/TP53 mRNAs; the sequence is NGLGPAPGSP…AGSPLSLRPA (207 aa). The residue at position 185 (Ser185) is a Phosphoserine. A Matrin-type 2 zinc finger spans residues 201–225; the sequence is LYCALCKVAVNSLSQLEAHNKGTKH. Thr248 carries the post-translational modification Phosphothreonine. A Matrin-type 3 zinc finger spans residues 261 to 285; sequence FHCEICNVKVNSEVQLKQHISSRRH. The disordered stretch occupies residues 279–309; sequence HISSRRHRDGVAGKPNPLLSRHKKSRGAGEL.

In terms of assembly, interacts with ELAVL1; the interaction is indirect, mRNA-dependent and may regulate p53/TP53 expression. Interacts with p53/TP53; the interaction is direct and enhances p53/TP53 transactivation functions on cell-cycle arrest target genes, resulting in growth arrest. Post-translationally, ubiquitinated upon prolonged exposure to genotoxic stress, which leads to proteasomal degradation of ZNF385A and releases p53/TP53 from cell-cycle arrest target gene promoters. As to expression, expressed predominantly in the retina.

The protein localises to the cytoplasm. Its subcellular location is the nucleus. It is found in the nucleolus. The protein resides in the cell projection. It localises to the dendrite. Its function is as follows. RNA-binding protein that affects the localization and the translation of a subset of mRNA. May play a role in adipogenesis through binding to the 3'-UTR of CEBPA mRNA and regulation of its translation. Targets ITPR1 mRNA to dendrites in Purkinje cells, and may regulate its activity-dependent translation. With ELAVL1, binds the 3'-UTR of p53/TP53 mRNAs to control their nuclear export induced by CDKN2A. Hence, may regulate p53/TP53 expression and mediate in part the CDKN2A anti-proliferative activity. May also bind CCNB1 mRNA. Alternatively, may also regulate p53/TP53 activity through direct protein-protein interaction. Interacts with p53/TP53 and promotes cell-cycle arrest over apoptosis enhancing preferentially the DNA binding and transactivation of p53/TP53 on cell-cycle arrest target genes over proapoptotic target genes. May also regulate the ubiquitination and stability of CDKN1A promoting DNA damage-induced cell cycle arrest. Also plays a role in megakaryocytes differentiation. This is Zinc finger protein 385A (ZNF385A) from Homo sapiens (Human).